The sequence spans 400 residues: Protein screw (400 aa).

Positions 1 to 16 (MLNVFFLTSLFYAASA) are cleaved as a signal peptide. A propeptide spanning residues 17-277 (TTYVTTNNHI…RFKRDLEKRR (261 aa)) is cleaved from the precursor. 5 N-linked (GlcNAc...) asparagine glycosylation sites follow: asparagine 165, asparagine 189, asparagine 201, asparagine 304, and asparagine 342. Disulfide bonds link cysteine 300–cysteine 365, cysteine 329–cysteine 397, and cysteine 333–cysteine 399.

The protein belongs to the TGF-beta family. In terms of assembly, heterodimers of scw/dpp are the active subunit, dpp/dpp homodimers elicit a basal response and scw/scw homodimers alone are ineffective in specifying a dorsal pattern. As to expression, ubiquitously expressed during early stages of embryogenesis, but the effect on development appears graded and is restricted to the dorsal side of the embryo.

Its subcellular location is the secreted. Part of the signal that specifies dorsal cell fates in the embryo. Acts together with dpp. This chain is Protein screw (scw), found in Drosophila melanogaster (Fruit fly).